The primary structure comprises 275 residues: Pantothenate synthetase (275 aa).

26 to 33 provides a ligand contact to ATP; that stretch reads MGNLHDGH. H33 serves as the catalytic Proton donor. Q57 lines the (R)-pantoate pocket. Beta-alanine is bound at residue Q57. Residue 144–147 participates in ATP binding; it reads GKKD. Q150 provides a ligand contact to (R)-pantoate. Residues V173 and 181–184 contribute to the ATP site; that span reads LSSR.

The protein belongs to the pantothenate synthetase family. In terms of assembly, homodimer.

The protein resides in the cytoplasm. It catalyses the reaction (R)-pantoate + beta-alanine + ATP = (R)-pantothenate + AMP + diphosphate + H(+). Its pathway is cofactor biosynthesis; (R)-pantothenate biosynthesis; (R)-pantothenate from (R)-pantoate and beta-alanine: step 1/1. In terms of biological role, catalyzes the condensation of pantoate with beta-alanine in an ATP-dependent reaction via a pantoyl-adenylate intermediate. The sequence is that of Pantothenate synthetase from Azoarcus sp. (strain BH72).